The following is a 325-amino-acid chain: Ferrochelatase (325 aa).

Residues histidine 195 and glutamate 276 each coordinate Fe cation.

Belongs to the ferrochelatase family.

It is found in the cytoplasm. It carries out the reaction heme b + 2 H(+) = protoporphyrin IX + Fe(2+). The protein operates within porphyrin-containing compound metabolism; protoheme biosynthesis; protoheme from protoporphyrin-IX: step 1/1. Catalyzes the ferrous insertion into protoporphyrin IX. In Methylococcus capsulatus (strain ATCC 33009 / NCIMB 11132 / Bath), this protein is Ferrochelatase.